Consider the following 315-residue polypeptide: Protein TIFY 4B (315 aa).

Positions 113–145 (CHRRDSPRSAEFSGSSGQFVADKDSHKTVSVSP) are disordered. The Tify domain occupies 151 to 186 (TNAVVGQMTIFYSGKVNVYDGVPPEKARSIMHFAAN). Positions 233–260 (QANRKVSLQRYLEKRKDRRFSKTKKAPG) match the Jas motif. The short motif at 235–242 (NRKVSLQR) is the Nuclear localization signal element. Residues 248 to 257 (KDRRFSKTKK) are compositionally biased toward basic residues. A disordered region spans residues 248 to 315 (KDRRFSKTKK…LNSDLNSEDN (68 aa)). The segment covering 293–315 (PENQTKSPNISVDLNSDLNSEDN) has biased composition (polar residues).

This sequence belongs to the TIFY/JAZ family. In terms of assembly, interacts with AFPH2/NINJA.

The protein resides in the nucleus. In terms of biological role, regulates the arrest of dispersed meristematic cells during lamina development. The sequence is that of Protein TIFY 4B (TIFY4B) from Arabidopsis thaliana (Mouse-ear cress).